A 357-amino-acid chain; its full sequence is Dynein axonemal assembly factor 10 (357 aa).

WD repeat units follow at residues 63 to 105 (EKAK…MPVY), 115 to 154 (NAID…DPVA), 162 to 205 (ENKR…LRWE), 207 to 249 (NIKN…PTKG), 257 to 297 (AHKS…QRSK), and 319 to 357 (LSTQ…LNKI).

Component of the PAQosome complex which is responsible for the biogenesis of several protein complexes and which consists of R2TP complex members RUVBL1, RUVBL2, RPAP3 and PIH1D1, URI complex members PFDN2, PFDN6, PDRG1, UXT and URI1 as well as ASDURF, POLR2E and DNAAF10/WDR92. Interacts with PIH1D1; the interaction associates DNAAF10 with the R2TP complex. Interacts with several dynein axonemal assembly factors. Widely expressed with the highest expression in testis.

Its subcellular location is the dynein axonemal particle. Its function is as follows. Key assembly factor specifically required for the stability of axonemal dynein heavy chains in cytoplasm. The chain is Dynein axonemal assembly factor 10 from Homo sapiens (Human).